Consider the following 362-residue polypeptide: Isopentenyl-diphosphate delta-isomerase (362 aa).

5-6 (RK) provides a ligand contact to substrate. FMN contacts are provided by residues 63–65 (AMT), serine 93, and asparagine 122. Glutamine 152 contributes to the substrate binding site. Glutamate 153 is a binding site for Mg(2+). Residues lysine 184, threonine 214, 259–261 (GIR), and 280–281 (AG) contribute to the FMN site.

It belongs to the IPP isomerase type 2 family. In terms of assembly, homooctamer. Dimer of tetramers. The cofactor is FMN. NADPH serves as cofactor. Mg(2+) is required as a cofactor.

The protein localises to the cytoplasm. The enzyme catalyses isopentenyl diphosphate = dimethylallyl diphosphate. Its function is as follows. Involved in the biosynthesis of isoprenoids. Catalyzes the 1,3-allylic rearrangement of the homoallylic substrate isopentenyl (IPP) to its allylic isomer, dimethylallyl diphosphate (DMAPP). The chain is Isopentenyl-diphosphate delta-isomerase from Nocardia farcinica (strain IFM 10152).